The following is a 475-amino-acid chain: FAD-dependent monooxygenase spyC (475 aa).

The N-terminal stretch at 1–24 is a signal peptide; the sequence is MTAKPPFKVIIVGGSIAGLTLAHC. Positions 36, 50, 109, 310, and 323 each coordinate FAD. Residues 444–464 traverse the membrane as a helical segment; sequence LLIPFLYPVVAFSLCVLAWIG.

The protein belongs to the paxM FAD-dependent monooxygenase family. It depends on FAD as a cofactor.

The protein resides in the membrane. It catalyses the reaction (2E,6E,10E)-geranylgeranyl-triacetate lactone + AH2 + O2 = (S)-(2E,6E,10E)-epoxygeranylgeranyl-triacetate lactone + A + H2O. It functions in the pathway secondary metabolite biosynthesis; terpenoid biosynthesis. FAD-dependent monooxygenase spyC; part of the gene cluster that mediates the biosynthesis of meroterpenoids called sartorypyrones. Within the pathway, spyC catalyzes the epoxidation of geranylgeranyl-triacetate lactone at the terminal olein to yield epoxygeranylgeranyl-triacetate lactone. The biosynthesis of sartorypyrones begins with the production of triacetic acid lactone (TAL) by the NR-PKS spyA using one molecule of acetyl-CoA and two molecules of malonyl-CoA. The prenyltransferase spyF then conjugates geranylgeranyl pyrophosphate (GGPP) to TAL to form geranylgeranyl-triacetate lactone, for which the pathway-specific geranylgeranyl pyrophosphate synthase (GGPS) spyE is required to provide GGPP. Subsequently, geranylgeranyl-triacetate lactone is epoxidized at the terminal olein by the FAD-dependent monooxygenase spyC, followed by cyclization of the terpenoid component catalyzed by the terpene cyclase spyD to produce both the bicyclic sartorypyrone F and the monocyclic sartorypyrone D. Finally, the last step of the biosynthesis involves the acetylation of the meroterpenoids sartorypyrones D and F by the acetyltransferase SpyB to produce sartorypyrones A and G, respectively. This is FAD-dependent monooxygenase spyC from Aspergillus fumigatus (strain ATCC MYA-4609 / CBS 101355 / FGSC A1100 / Af293) (Neosartorya fumigata).